Here is a 95-residue protein sequence, read N- to C-terminus: MSIDIETARRVAKLARIKVEDDALPALAGEFNHILGFIEQLNEVDVDDVEPMTSVTPMRLKRREDVVTDGDQQAAVLSNAPDAREGFFAVPKVVE.

Belongs to the GatC family. In terms of assembly, heterotrimer of A, B and C subunits.

It carries out the reaction L-glutamyl-tRNA(Gln) + L-glutamine + ATP + H2O = L-glutaminyl-tRNA(Gln) + L-glutamate + ADP + phosphate + H(+). The catalysed reaction is L-aspartyl-tRNA(Asn) + L-glutamine + ATP + H2O = L-asparaginyl-tRNA(Asn) + L-glutamate + ADP + phosphate + 2 H(+). Allows the formation of correctly charged Asn-tRNA(Asn) or Gln-tRNA(Gln) through the transamidation of misacylated Asp-tRNA(Asn) or Glu-tRNA(Gln) in organisms which lack either or both of asparaginyl-tRNA or glutaminyl-tRNA synthetases. The reaction takes place in the presence of glutamine and ATP through an activated phospho-Asp-tRNA(Asn) or phospho-Glu-tRNA(Gln). This chain is Aspartyl/glutamyl-tRNA(Asn/Gln) amidotransferase subunit C, found in Dinoroseobacter shibae (strain DSM 16493 / NCIMB 14021 / DFL 12).